The sequence spans 264 residues: Somatomedin-B and thrombospondin type-1 domain-containing protein (264 aa).

The N-terminal stretch at 1–20 (MRTLWMALCVLARLWPGALA) is a signal peptide. One can recognise an SMB domain in the interval 24–75 (DAGRCCPGRDPACFASGWRQDRVYGTCFCDQACRLTGDCCFDYARACPARPC). 7 cysteine pairs are disulfide-bonded: C28-C36, C28-C52, C36-C70, C50-C52, C50-C63, C56-C62, and C63-C70. Residues 74 to 127 (PCIVGEWSPWSGCASQCRPTARVRRRAVQQEPQNGGEPCPALEERAGCLEYATP) form the TSP type-1 domain. Residue N227 is glycosylated (N-linked (GlcNAc...) asparagine).

Belongs to the thrombospondin family.

The protein resides in the secreted. It localises to the extracellular space. It is found in the extracellular matrix. This Bos taurus (Bovine) protein is Somatomedin-B and thrombospondin type-1 domain-containing protein (SBSPON).